A 386-amino-acid polypeptide reads, in one-letter code: Succinate--CoA ligase [ADP-forming] subunit beta (386 aa).

The region spanning 9–244 (KAVLRSYGVS…LDEEDAKEIE (236 aa)) is the ATP-grasp domain. ATP is bound by residues Lys-46, 53–55 (GRG), Glu-99, Cys-102, and Glu-107. 2 residues coordinate Mg(2+): Asn-199 and Asp-213. Substrate-binding positions include Asn-264 and 321-323 (GIM).

This sequence belongs to the succinate/malate CoA ligase beta subunit family. As to quaternary structure, heterotetramer of two alpha and two beta subunits. It depends on Mg(2+) as a cofactor.

It catalyses the reaction succinate + ATP + CoA = succinyl-CoA + ADP + phosphate. The enzyme catalyses GTP + succinate + CoA = succinyl-CoA + GDP + phosphate. Its pathway is carbohydrate metabolism; tricarboxylic acid cycle; succinate from succinyl-CoA (ligase route): step 1/1. Functionally, succinyl-CoA synthetase functions in the citric acid cycle (TCA), coupling the hydrolysis of succinyl-CoA to the synthesis of either ATP or GTP and thus represents the only step of substrate-level phosphorylation in the TCA. The beta subunit provides nucleotide specificity of the enzyme and binds the substrate succinate, while the binding sites for coenzyme A and phosphate are found in the alpha subunit. This Bacillus anthracis (strain A0248) protein is Succinate--CoA ligase [ADP-forming] subunit beta.